An 83-amino-acid chain; its full sequence is Mu-theraphotoxin-Hhn2p (83 aa).

Positions 1–21 are cleaved as a signal peptide; that stretch reads MKASMYLALAGLVLLFVVGYA. Residues 22–48 constitute a propeptide that is removed on maturation; that stretch reads SESEEKEFPRELLSKIFAVDDFKGEER. Cystine bridges form between cysteine 50–cysteine 65, cysteine 57–cysteine 70, and cysteine 64–cysteine 77. Leucine 81 is modified (leucine amide).

It belongs to the neurotoxin 10 (Hwtx-1) family. 15 (Hntx-3) subfamily. In terms of assembly, monomer. In terms of tissue distribution, expressed by the venom gland.

The protein localises to the secreted. Lethal neurotoxin. Selectively blocks tetrodotoxin-sensitive voltage-gated sodium channels (Nav). Does not affect tetrodotoxin-resistant voltage-gated sodium channels or calcium channels. The polypeptide is Mu-theraphotoxin-Hhn2p (Cyriopagopus hainanus (Chinese bird spider)).